Reading from the N-terminus, the 208-residue chain is Small ribosomal subunit protein uS4 (208 aa).

One can recognise an S4 RNA-binding domain in the interval 97–158 (TRLDNVIYRM…RAQKYLCVQE (62 aa)).

It belongs to the universal ribosomal protein uS4 family. As to quaternary structure, part of the 30S ribosomal subunit. Contacts protein S5. The interaction surface between S4 and S5 is involved in control of translational fidelity.

One of the primary rRNA binding proteins, it binds directly to 16S rRNA where it nucleates assembly of the body of the 30S subunit. Its function is as follows. With S5 and S12 plays an important role in translational accuracy. The sequence is that of Small ribosomal subunit protein uS4 from Xylella fastidiosa (strain 9a5c).